Here is a 337-residue protein sequence, read N- to C-terminus: Deoxyhypusine hydroxylase (337 aa).

HEAT-like PBS-type repeat units follow at residues Leu-73–Asp-99 and Cys-106–Arg-132. Residues His-75, Glu-76, His-108, and Glu-109 each contribute to the Fe cation site. Basic and acidic residues predominate over residues Ala-156–Pro-165. The tract at residues Ala-156–Glu-183 is disordered. 3 HEAT-like PBS-type repeats span residues Ser-202–Asp-235, Phe-240–Asn-266, and Val-273–Asp-300. Fe cation-binding residues include His-242, Glu-243, His-275, and Glu-276.

It belongs to the deoxyhypusine hydroxylase family. The cofactor is Fe(2+).

It localises to the cytoplasm. It is found in the nucleus. The enzyme catalyses [eIF5A protein]-deoxyhypusine + AH2 + O2 = [eIF5A protein]-hypusine + A + H2O. It participates in protein modification; eIF5A hypusination. Catalyzes the hydroxylation of the N(6)-(4-aminobutyl)-L-lysine intermediate to form hypusine, an essential post-translational modification only found in mature eIF-5A factor. This is Deoxyhypusine hydroxylase from Gibberella zeae (strain ATCC MYA-4620 / CBS 123657 / FGSC 9075 / NRRL 31084 / PH-1) (Wheat head blight fungus).